A 126-amino-acid chain; its full sequence is Small ribosomal subunit protein eS8 (126 aa).

The span at 1–10 (MAIWQGSSLR) shows a compositional bias: polar residues. The tract at residues 1-35 (MAIWQGSSLRKPSGARSRRNKNKRNAEFGRNPAET) is disordered.

It belongs to the eukaryotic ribosomal protein eS8 family. Part of the 30S ribosomal subunit.

The protein is Small ribosomal subunit protein eS8 of Methanosphaera stadtmanae (strain ATCC 43021 / DSM 3091 / JCM 11832 / MCB-3).